The sequence spans 1075 residues: MAPRKRNRHALGFLCCFGGSDLPEINLKDNNPLQFLDFTVPIPPTEELNARFSELVDELDLTDKNREAMFALPPEKKWQIYCSKKKEQEDPNKLATSWPDYYIDRINSMAAMQTLYAFDEEETEMKNKIVEDLKTALRTQPMRFVMRFIELDGLSCLLNFLKSMDYETSESRIHTSVIGCIKALMNNSQGRAHVLAHPESINIISQSLRTENIKTKIAVLEILGAVCLVPDGHKKVLQAMLHYQVYAAERTRFQTLLNELDRSMGRYRDEVNLKTAIMSFINAVLNAGAGEDNLEFRLHLRYEFLMLGIQPVIDKLREHENATLDRHLDFFEMVRNEDDLELAKRFDLIHIDTKSASQMFELIKKRLKHTDAYPYLLSILQHCLQMPYKRNGGNFQQWQLLDRILQQIVLQDERGDDPDIAPLENFNVKNIIKMLVNENEVKQWRDQAEKFRKDHAELMSKLEKKERECETKTQEKDEMMKTLNKMKDKLQKESLELRQARDQMNDLVAQLNEYSQGGSISFPAPPPPPPGGPLALSSALSSALTSENLPPLPPPLPFSSCPPPPAPPPPPGGPPPPPGAPPFFSLGVPPPSTTTFSSAGTSLKKKSIPQPSHPLKSFNWAKLSEERIHGTIWNEIDDLKAFKVLDLEDFEKMFSAYQRHQKEMGSTEDLYLSTRKVKELSVIDGRRAQNCVILLSKLKLSNEEIRQAILKMDEQEDLAKDMLEQLLKFVPEKSDTDLLEEHKHEIERMARADRFLFEMSRIDHYQQRLQALFFKKKFPERLAEAKPKVEAILLASKELIRSKRLRQLLEVVLAFGNYMNKGQRGSAYGFKVSSLNKIADTKSSIDRNITLLHYLIMIFEKNYPDILDIQTELQHLPEAAKVNLVELEKEVNNIKTGLKAVEAELDYQKRRIRESGDRFVPVMSDFITVASFSFSELEDLLNDARDKYAKALKHFGENEGKMQPDEFFGIFDTFLQSFAEAKQDLENMRKKKEEEERRARMEAMLKEQREKERRQKKAKAGSISEETGEFDDLVSALRSGEVFDKDLSKLKRNRKRSGNQGLETSRERVVTKLNY.

Residues 40–416 form the GBD/FH3 domain; sequence VPIPPTEELN…QIVLQDERGD (377 aa). Positions 437-517 form a coiled coil; sequence NENEVKQWRD…VAQLNEYSQG (81 aa). Disordered regions lie at residues 517–611, 1006–1025, and 1048–1075; these read GGSI…IPQP, KEQREKERRQKKAKAGSISE, and SKLKRNRKRSGNQGLETSRERVVTKLNY. Residues 523–532 are compositionally biased toward pro residues; that stretch reads PAPPPPPPGG. Over residues 533 to 544 the composition is skewed to low complexity; it reads PLALSSALSSAL. Residues 550–581 show a composition bias toward pro residues; it reads PPLPPPLPFSSCPPPPAPPPPPGGPPPPPGAP. The 471-residue stretch at 605–1075 folds into the FH2 domain; sequence KKSIPQPSHP…RERVVTKLNY (471 aa). One can recognise a DAD domain in the interval 1025 to 1075; it reads EETGEFDDLVSALRSGEVFDKDLSKLKRNRKRSGNQGLETSRERVVTKLNY. Positions 1064–1075 are enriched in basic and acidic residues; sequence TSRERVVTKLNY.

This sequence belongs to the formin homology family. Expressed in progenitor populations of the embryonic spinal cord (at protein level).

In terms of biological role, key regulator of the Wnt signaling pathway, which is required for various processes during development, such as dorsal patterning, determination of left/right symmetry or myelination in the central nervous system. Acts downstream of Wnt ligands and upstream of beta-catenin (CTNNB1). Required for canonical Wnt signaling pathway during patterning in the dorsal spinal cord by promoting the aggregation of Disheveled (Dvl) complexes, thereby clustering and formation of Wnt receptor signalosomes and potentiating Wnt activity. During dorsal patterning of the spinal cord, inhibits oligodendrocytes differentiation via interaction with PIP5K1A. Also regulates non-canonical Wnt signaling pathway. Acts downstream of PITX2 in the developing gut and is required for left/right asymmetry within dorsal mesentery: affects mesenchymal condensation by lengthening cadherin-based junctions through WNT5A and non-canonical Wnt signaling, inducing polarized condensation in the left dorsal mesentery necessary to initiate gut rotation. Together with DAAM1, required for myocardial maturation and sarcomere assembly. This chain is Disheveled-associated activator of morphogenesis 2, found in Gallus gallus (Chicken).